The primary structure comprises 268 residues: Chymotrypsin-C (268 aa).

Positions M1–C16 are cleaved as a signal peptide. Residues C17–R29 constitute a propeptide, activation peptide. Intrachain disulfides connect C17-C141, C59-C75, C155-C222, C186-C202, and C212-C243. Residue N25 is glycosylated (N-linked (GlcNAc...) asparagine). The Peptidase S1 domain maps to V30–Q267. Catalysis depends on H74, which acts as the Charge relay system. The N-linked (GlcNAc...) asparagine glycan is linked to N90. D121 (charge relay system) is an active-site residue. Residue S216 is the Charge relay system of the active site.

It belongs to the peptidase S1 family. Elastase subfamily. In terms of tissue distribution, pancreas.

The enzyme catalyses Preferential cleavage: Leu-|-Xaa, Tyr-|-Xaa, Phe-|-Xaa, Met-|-Xaa, Trp-|-Xaa, Gln-|-Xaa, Asn-|-Xaa.. Functionally, regulates activation and degradation of trypsinogens and procarboxypeptidases by targeting specific cleavage sites within their zymogen precursors. Has chymotrypsin-type protease activity and hypocalcemic activity. Cleaves TRY4 and TRY5 and thereby inhibits their autoactivation. The polypeptide is Chymotrypsin-C (Ctrc) (Rattus norvegicus (Rat)).